The following is a 198-amino-acid chain: Segregation and condensation protein B (198 aa).

A disordered region spans residues 167–198; that stretch reads PKLADPEAEDPDQSEMDLFFDRFNQSKEQEEE. Over residues 172-181 the composition is skewed to acidic residues; it reads PEAEDPDQSE.

Belongs to the ScpB family. In terms of assembly, homodimer. Homodimerization may be required to stabilize the binding of ScpA to the Smc head domains. Component of a cohesin-like complex composed of ScpA, ScpB and the Smc homodimer, in which ScpA and ScpB bind to the head domain of Smc. The presence of the three proteins is required for the association of the complex with DNA.

It localises to the cytoplasm. Its function is as follows. Participates in chromosomal partition during cell division. May act via the formation of a condensin-like complex containing Smc and ScpA that pull DNA away from mid-cell into both cell halves. This Listeria innocua serovar 6a (strain ATCC BAA-680 / CLIP 11262) protein is Segregation and condensation protein B.